Here is a 937-residue protein sequence, read N- to C-terminus: uncharacterized protein (937 aa).

Residue T2 is modified to N-acetylthreonine. The tract at residues 281 to 937 is disordered; sequence NESPSSNINT…KKGKGKGGRK (657 aa). The segment covering 290-308 has biased composition (low complexity); sequence TTTTSTTTTTTTTTSSPVV. The active-site Charge relay system is the T292. Composition is skewed to basic and acidic residues over residues 309–402, 411–431, 469–489, 512–532, 600–615, 667–687, 738–758, and 780–872; these read EESK…EKQQ, AEKE…RLEA, AEKE…KLEA, and AEKE…KVEE. Residues 345–802 are a coiled coil; the sequence is VDDSKEKEEK…KAAEETKVEE (458 aa). Residues 887–897 are compositionally biased toward acidic residues; the sequence is EETEEGEEVDE. Low complexity predominate over residues 898-924; the sequence is ASNTTTEQTTTNANQPKKPNNNNNNNK. Basic residues predominate over residues 925 to 937; that stretch reads GKGKKGKGKGGRK.

This sequence belongs to the AB hydrolase superfamily.

This is an uncharacterized protein from Dictyostelium discoideum (Social amoeba).